Consider the following 310-residue polypeptide: N-acetyl-gamma-glutamyl-phosphate reductase (310 aa).

The active site involves Cys117.

The protein belongs to the NAGSA dehydrogenase family. Type 2 subfamily.

The protein localises to the cytoplasm. The enzyme catalyses N-acetyl-L-glutamate 5-semialdehyde + phosphate + NADP(+) = N-acetyl-L-glutamyl 5-phosphate + NADPH + H(+). The protein operates within amino-acid biosynthesis; L-arginine biosynthesis; N(2)-acetyl-L-ornithine from L-glutamate: step 3/4. Catalyzes the NADPH-dependent reduction of N-acetyl-5-glutamyl phosphate to yield N-acetyl-L-glutamate 5-semialdehyde. The sequence is that of N-acetyl-gamma-glutamyl-phosphate reductase from Rhizobium leguminosarum bv. trifolii (strain WSM2304).